We begin with the raw amino-acid sequence, 237 residues long: ATP-dependent dethiobiotin synthetase BioD (237 aa).

12–17 (DAGKTL) contacts ATP. A Mg(2+)-binding site is contributed by T16. K37 is an active-site residue. S41 lines the substrate pocket. ATP-binding positions include D54, 116–119 (EGAG), and 213–215 (PRL). Mg(2+) contacts are provided by D54 and E116.

Belongs to the dethiobiotin synthetase family. In terms of assembly, homodimer. Mg(2+) is required as a cofactor.

Its subcellular location is the cytoplasm. The catalysed reaction is (7R,8S)-7,8-diammoniononanoate + CO2 + ATP = (4R,5S)-dethiobiotin + ADP + phosphate + 3 H(+). The protein operates within cofactor biosynthesis; biotin biosynthesis; biotin from 7,8-diaminononanoate: step 1/2. In terms of biological role, catalyzes a mechanistically unusual reaction, the ATP-dependent insertion of CO2 between the N7 and N8 nitrogen atoms of 7,8-diaminopelargonic acid (DAPA, also called 7,8-diammoniononanoate) to form a ureido ring. This chain is ATP-dependent dethiobiotin synthetase BioD, found in Chromohalobacter salexigens (strain ATCC BAA-138 / DSM 3043 / CIP 106854 / NCIMB 13768 / 1H11).